The following is a 248-amino-acid chain: 1-(5-phosphoribosyl)-5-[(5-phosphoribosylamino)methylideneamino] imidazole-4-carboxamide isomerase (248 aa).

Asp-8 serves as the catalytic Proton acceptor. Asp-131 functions as the Proton donor in the catalytic mechanism.

The protein belongs to the HisA/HisF family.

The protein localises to the cytoplasm. The catalysed reaction is 1-(5-phospho-beta-D-ribosyl)-5-[(5-phospho-beta-D-ribosylamino)methylideneamino]imidazole-4-carboxamide = 5-[(5-phospho-1-deoxy-D-ribulos-1-ylimino)methylamino]-1-(5-phospho-beta-D-ribosyl)imidazole-4-carboxamide. The protein operates within amino-acid biosynthesis; L-histidine biosynthesis; L-histidine from 5-phospho-alpha-D-ribose 1-diphosphate: step 4/9. This is 1-(5-phosphoribosyl)-5-[(5-phosphoribosylamino)methylideneamino] imidazole-4-carboxamide isomerase from Cupriavidus pinatubonensis (strain JMP 134 / LMG 1197) (Cupriavidus necator (strain JMP 134)).